Consider the following 137-residue polypeptide: ATP synthase epsilon chain, chloroplastic (137 aa).

This sequence belongs to the ATPase epsilon chain family. As to quaternary structure, F-type ATPases have 2 components, CF(1) - the catalytic core - and CF(0) - the membrane proton channel. CF(1) has five subunits: alpha(3), beta(3), gamma(1), delta(1), epsilon(1). CF(0) has three main subunits: a, b and c.

Its subcellular location is the plastid. The protein resides in the chloroplast thylakoid membrane. Produces ATP from ADP in the presence of a proton gradient across the membrane. This chain is ATP synthase epsilon chain, chloroplastic, found in Agrostis stolonifera (Creeping bentgrass).